Here is a 173-residue protein sequence, read N- to C-terminus: Placenta-specific protein 1 (173 aa).

Positions Met1–Gln23 are cleaved as a signal peptide.

The protein belongs to the PLAC1 family.

It is found in the secreted. May play a role in placental development. The sequence is that of Placenta-specific protein 1 from Rattus norvegicus (Rat).